The chain runs to 327 residues: MNIISDKEILEVRTSQVFRFSVYFIDTSCIISMAVTVLAIFQLHSKQVFNPSTTRLLITDLVFINIHNLSYIFLQNWSLFRSFFYQTANDIMFKSEECWPHHVTNEFTKVVTVFNQFALIINRISVTIDSKRFSHANYGFLLAILSLIASTVFTAQQHFLGPIHGMRTTSCFRESDVVLDLKTEHIIPYLAICLTSIVCSLLLIIYVKKTQKTKTYDIESEYTKKEAVVSSISVAILGIIQLVLFCFYDTFLTIFAKLTAENPNVHDTNIIGWFYTSPLNAIISPTAVFLYISWIKKNRQMHIRKMTKVNKSENGCHFQQLSVMWNK.

Transmembrane regions (helical) follow at residues 20 to 40, 56 to 76, 133 to 153, 186 to 206, 227 to 247, and 270 to 290; these read FSVY…VLAI, LLIT…FLQN, FSHA…STVF, IIPY…LIIY, AVVS…LFCF, and IIGW…AVFL.

This sequence belongs to the nematode receptor-like protein sra family.

It localises to the membrane. The sequence is that of Serpentine receptor class alpha-33 (sra-33) from Caenorhabditis elegans.